A 390-amino-acid chain; its full sequence is Oxysterol-binding protein 10 (390 aa).

This sequence belongs to the OSBP family.

In Dictyostelium discoideum (Social amoeba), this protein is Oxysterol-binding protein 10 (osbJ).